We begin with the raw amino-acid sequence, 918 residues long: Protein SEY1 homolog (918 aa).

At 1-701 (MESSNHLPNK…AGTSVSSWRN (701 aa)) the chain is on the cytoplasmic side. A GB1/RHD3-type G domain is found at 46 to 280 (GFKFNVVTIL…VPSDGFFVYS (235 aa)). 56 to 63 (GSQSSGKS) lines the GTP pocket. A coiled-coil region spans residues 554–626 (SLVLLLKATQ…DALTLLQVLK (73 aa)). The chain crosses the membrane as a helical span at residues 702–722 (IPPVFWLVLLVLGWNELRAAF). Over 723–725 (RVL) the chain is Lumenal. The chain crosses the membrane as a helical span at residues 726–746 (LKFYILIPLLIVSYFTFSYSA). Residues 747–918 (NKLLGPKANE…CGKAVHLAQW (172 aa)) are Cytoplasmic-facing.

The protein belongs to the TRAFAC class dynamin-like GTPase superfamily. GB1/RHD3 GTPase family. RHD3 subfamily.

It localises to the endoplasmic reticulum membrane. Probable GTP-binding protein that may be involved in cell development. This chain is Protein SEY1 homolog, found in Theileria annulata.